The primary structure comprises 449 residues: Glucose-6-phosphate isomerase (449 aa).

Glutamate 291 acts as the Proton donor in catalysis. Catalysis depends on residues histidine 312 and lysine 426.

This sequence belongs to the GPI family.

The protein resides in the cytoplasm. The enzyme catalyses alpha-D-glucose 6-phosphate = beta-D-fructose 6-phosphate. It functions in the pathway carbohydrate biosynthesis; gluconeogenesis. The protein operates within carbohydrate degradation; glycolysis; D-glyceraldehyde 3-phosphate and glycerone phosphate from D-glucose: step 2/4. Its function is as follows. Catalyzes the reversible isomerization of glucose-6-phosphate to fructose-6-phosphate. This chain is Glucose-6-phosphate isomerase, found in Streptococcus pneumoniae serotype 4 (strain ATCC BAA-334 / TIGR4).